The primary structure comprises 451 residues: tRNA modification GTPase MnmE (451 aa).

(6S)-5-formyl-5,6,7,8-tetrahydrofolate is bound by residues arginine 23, glutamate 80, and lysine 119. The region spanning 215-372 (GIKVVLTGQP…LRTVLLKTVG (158 aa)) is the TrmE-type G domain. Residue asparagine 225 participates in K(+) binding. GTP-binding positions include 225–230 (NVGKSS), 244–250 (TEIPGTT), and 269–272 (DTAG). Serine 229 provides a ligand contact to Mg(2+). The K(+) site is built by threonine 244, isoleucine 246, and threonine 249. Threonine 250 contributes to the Mg(2+) binding site. Lysine 451 is a (6S)-5-formyl-5,6,7,8-tetrahydrofolate binding site.

This sequence belongs to the TRAFAC class TrmE-Era-EngA-EngB-Septin-like GTPase superfamily. TrmE GTPase family. In terms of assembly, homodimer. Heterotetramer of two MnmE and two MnmG subunits. K(+) is required as a cofactor.

It is found in the cytoplasm. Exhibits a very high intrinsic GTPase hydrolysis rate. Involved in the addition of a carboxymethylaminomethyl (cmnm) group at the wobble position (U34) of certain tRNAs, forming tRNA-cmnm(5)s(2)U34. This Nitrosomonas eutropha (strain DSM 101675 / C91 / Nm57) protein is tRNA modification GTPase MnmE.